A 78-amino-acid polypeptide reads, in one-letter code: Acyl carrier protein (78 aa).

Residues 1-76 (MAIHPKVKDI…DVASYLEKKG (76 aa)) form the Carrier domain. Position 36 is an O-(pantetheine 4'-phosphoryl)serine (serine 36).

It belongs to the acyl carrier protein (ACP) family. In terms of processing, 4'-phosphopantetheine is transferred from CoA to a specific serine of apo-ACP by AcpS. This modification is essential for activity because fatty acids are bound in thioester linkage to the sulfhydryl of the prosthetic group.

It localises to the cytoplasm. Its pathway is lipid metabolism; fatty acid biosynthesis. Its function is as follows. Carrier of the growing fatty acid chain in fatty acid biosynthesis. The sequence is that of Acyl carrier protein from Bdellovibrio bacteriovorus (strain ATCC 15356 / DSM 50701 / NCIMB 9529 / HD100).